The chain runs to 369 residues: Anhydro-N-acetylmuramic acid kinase (369 aa).

12-19 contributes to the ATP binding site; that stretch reads GTSMDGVD.

It belongs to the anhydro-N-acetylmuramic acid kinase family.

The enzyme catalyses 1,6-anhydro-N-acetyl-beta-muramate + ATP + H2O = N-acetyl-D-muramate 6-phosphate + ADP + H(+). The protein operates within amino-sugar metabolism; 1,6-anhydro-N-acetylmuramate degradation. It participates in cell wall biogenesis; peptidoglycan recycling. In terms of biological role, catalyzes the specific phosphorylation of 1,6-anhydro-N-acetylmuramic acid (anhMurNAc) with the simultaneous cleavage of the 1,6-anhydro ring, generating MurNAc-6-P. Is required for the utilization of anhMurNAc either imported from the medium or derived from its own cell wall murein, and thus plays a role in cell wall recycling. The sequence is that of Anhydro-N-acetylmuramic acid kinase from Shewanella loihica (strain ATCC BAA-1088 / PV-4).